A 404-amino-acid polypeptide reads, in one-letter code: Keratin, type I cuticular Ha3-I (404 aa).

The segment at 1–56 (MSYSCGLPNLSCRTSCSSRPCVPPSCHGCTLPGACNIPANVSNCNWFCEGSFNGSE) is head. Positions 56 to 367 (EKETMQFLND…SLLESEDCKL (312 aa)) constitute an IF rod domain. A coil 1A region spans residues 57–91 (KETMQFLNDRLASYLEKVRQLERDNAELENLIRER). Residues 92–102 (SQQQEPLVCAS) form a linker 1 region. Residues 103–203 (YQSYFKTIEE…HEQEVNTLRC (101 aa)) form a coil 1B region. The linker 12 stretch occupies residues 204–219 (QLGGRLNVEVDAAPAV). Residues 220–363 (DLNQVLNETR…NTYRSLLESE (144 aa)) form a coil 2 region. Residues 364–404 (DCKLPSNPCAITNACDKSTGPCISNPCGPRARCGPCNTFGY) form a tail region.

This sequence belongs to the intermediate filament family.

This is Keratin, type I cuticular Ha3-I from Pan troglodytes (Chimpanzee).